The following is a 309-amino-acid chain: Sulfate adenylyltransferase subunit 2 (309 aa).

Belongs to the PAPS reductase family. CysD subfamily. In terms of assembly, heterodimer composed of CysD, the smaller subunit, and CysN.

It carries out the reaction sulfate + ATP + H(+) = adenosine 5'-phosphosulfate + diphosphate. It functions in the pathway sulfur metabolism; hydrogen sulfide biosynthesis; sulfite from sulfate: step 1/3. Its function is as follows. With CysN forms the ATP sulfurylase (ATPS) that catalyzes the adenylation of sulfate producing adenosine 5'-phosphosulfate (APS) and diphosphate, the first enzymatic step in sulfur assimilation pathway. APS synthesis involves the formation of a high-energy phosphoric-sulfuric acid anhydride bond driven by GTP hydrolysis by CysN coupled to ATP hydrolysis by CysD. This Mycobacterium sp. (strain KMS) protein is Sulfate adenylyltransferase subunit 2.